A 503-amino-acid polypeptide reads, in one-letter code: Putative ribose/galactose/methyl galactoside import ATP-binding protein (503 aa).

2 ABC transporter domains span residues 7–244 (LEMI…VGRE) and 254–498 (VPIG…TGQL). ATP is bound at residue 39–46 (GENGAGKS).

It belongs to the ABC transporter superfamily. Carbohydrate importer 2 (CUT2) (TC 3.A.1.2) family.

It localises to the cell membrane. It catalyses the reaction D-ribose(out) + ATP + H2O = D-ribose(in) + ADP + phosphate + H(+). It carries out the reaction D-galactose(out) + ATP + H2O = D-galactose(in) + ADP + phosphate + H(+). Functionally, part of an ABC transporter complex involved in carbohydrate import. Could be involved in ribose, galactose and/or methyl galactoside import. Responsible for energy coupling to the transport system. The chain is Putative ribose/galactose/methyl galactoside import ATP-binding protein from Geobacillus kaustophilus (strain HTA426).